Reading from the N-terminus, the 470-residue chain is Dendritic cell-specific transmembrane protein (470 aa).

Residues 1–34 (MGIWTSGTDIFLSLWEIYVSPRSPGWMDFIQHLG) are Cytoplasmic-facing. A helical membrane pass occupies residues 35–55 (VCCLVALISVGLLSVAACWFL). Over 56-57 (PS) the chain is Extracellular. The chain crosses the membrane as a helical span at residues 58 to 78 (IIAAAASWIITCVLLCCSKHA). Residues 79 to 97 (RCFILLVFLSCGLREGRNA) are Cytoplasmic-facing. Residues 98–118 (LIAAGTGIVILGHVENIFHNF) traverse the membrane as a helical segment. At 119–209 (KGLLDGMTCN…MATTTEVLSS (91 aa)) the chain is on the extracellular side. A helical membrane pass occupies residues 210-230 (LGQKLLAFAGLSLVLLGTGLF). Over 231-292 (MKRFLGPCGW…FWPTPKERKN (62 aa)) the chain is Cytoplasmic. A helical transmembrane segment spans residues 293 to 313 (LGLFFLPILIHLCIWVLFAAV). Residues 314–376 (DYLLYRLIFS…PKPKFLLSET (63 aa)) are Extracellular-facing. The chain crosses the membrane as a helical span at residues 377-397 (WVPLSVILLILVMLGLLSSIL). Residues 398-470 (MQLKILVSAS…QMDMASADKS (73 aa)) are Cytoplasmic-facing.

As to quaternary structure, monomer. Homodimer. Isoform 1 interacts (via the C-terminus cytoplasmic tail) with OS9 isoform 1 (via the C-terminus tail); the interaction induces DCSTAMP redistribution to the endoplasmic reticulum-Golgi intermediate compartment. Isoform 1 interacts (via the C-terminus cytoplasmic tail) with OS9 isoform 2 (via the C-terminus tail). Interacts with CREB3. In terms of processing, glycosylated. In terms of tissue distribution, preferentially expressed by dendritic cells (DCs). Detected in both immature and mature DCs. Highly expressed in lymph nodes, lung, kidney and liver. Expressed at lower levels in pancreas, bone marrow, spleen, leukocytes, in freshly isolated peripheral blood mononuclear cells (PBMC) and B-cells. Not expressed in freshly isolated monocytes.

The protein resides in the cell membrane. Its subcellular location is the endoplasmic reticulum membrane. It is found in the endoplasmic reticulum-Golgi intermediate compartment membrane. It localises to the endosome. Functionally, probable cell surface receptor that plays several roles in cellular fusion, cell differentiation, bone and immune homeostasis. Plays a role in TNFSF11-mediated osteoclastogenesis. Cooperates with OCSTAMP in modulating cell-cell fusion in both osteoclasts and foreign body giant cells (FBGCs). Participates in osteoclast bone resorption. Involved in inducing the expression of tartrate-resistant acid phosphatase in osteoclast precursors. Plays a role in haematopoietic stem cell differentiation of bone marrow cells toward the myeloid lineage. Inhibits the development of neutrophilic granulocytes. Plays also a role in the regulation of dendritic cell (DC) antigen presentation activity by controlling phagocytic activity. Involved in the maintenance of immune self-tolerance and avoidance of autoimmune reactions. This is Dendritic cell-specific transmembrane protein (DCSTAMP) from Homo sapiens (Human).